The primary structure comprises 216 residues: Pyrophosphatase PpaX (216 aa).

D9 (nucleophile) is an active-site residue.

It belongs to the HAD-like hydrolase superfamily. PpaX family. Mg(2+) serves as cofactor.

It carries out the reaction diphosphate + H2O = 2 phosphate + H(+). Its function is as follows. Hydrolyzes pyrophosphate formed during P-Ser-HPr dephosphorylation by HPrK/P. Might play a role in controlling the intracellular pyrophosphate pool. The polypeptide is Pyrophosphatase PpaX (Bacillus anthracis (strain CDC 684 / NRRL 3495)).